A 229-amino-acid polypeptide reads, in one-letter code: Potassium/proton antiporter CemA (229 aa).

The next 3 helical transmembrane spans lie at 7-27 (LTPL…SISF), 106-126 (IILH…YSIL), and 189-209 (IISG…KYWI).

Belongs to the CemA family.

The protein localises to the plastid. Its subcellular location is the chloroplast inner membrane. It carries out the reaction K(+)(in) + H(+)(out) = K(+)(out) + H(+)(in). Its function is as follows. Contributes to K(+)/H(+) antiport activity by supporting proton efflux to control proton extrusion and homeostasis in chloroplasts in a light-dependent manner to modulate photosynthesis. Prevents excessive induction of non-photochemical quenching (NPQ) under continuous-light conditions. Indirectly promotes efficient inorganic carbon uptake into chloroplasts. The polypeptide is Potassium/proton antiporter CemA (Liriodendron tulipifera (Tuliptree)).